The primary structure comprises 1368 residues: DNA-directed RNA polymerase subunit beta (1368 aa).

Belongs to the RNA polymerase beta chain family. In terms of assembly, the RNAP catalytic core consists of 2 alpha, 1 beta, 1 beta' and 1 omega subunit. When a sigma factor is associated with the core the holoenzyme is formed, which can initiate transcription.

It catalyses the reaction RNA(n) + a ribonucleoside 5'-triphosphate = RNA(n+1) + diphosphate. DNA-dependent RNA polymerase catalyzes the transcription of DNA into RNA using the four ribonucleoside triphosphates as substrates. The sequence is that of DNA-directed RNA polymerase subunit beta from Burkholderia cenocepacia (strain ATCC BAA-245 / DSM 16553 / LMG 16656 / NCTC 13227 / J2315 / CF5610) (Burkholderia cepacia (strain J2315)).